The chain runs to 807 residues: Serine/threonine-protein kinase AfsK (807 aa).

One can recognise a Protein kinase domain in the interval 16–272 (FEVLGRLGAG…QAQLAPHLFA (257 aa)). Residues 22 to 30 (LGAGGMGLV) and K44 contribute to the ATP site. Phosphoserine; by autocatalysis is present on S71. Catalysis depends on D138, which acts as the Proton acceptor. At T168 the chain carries Phosphothreonine; by autocatalysis. 2 disordered regions span residues 292–328 (MIER…HRLA) and 353–429 (AGPS…PSPA). A compositionally biased stretch (basic residues) spans 297-315 (RGGRRTARRPPRPRPRRLR). Residues 353 to 363 (AGPSAAPDGGP) show a composition bias toward low complexity.

It belongs to the protein kinase superfamily. Ser/Thr protein kinase family. In terms of assembly, interacts (via the N-terminal kinase domain) with KbpA; the interaction prevents autophosphorylation of AfsK. Post-translationally, autophosphorylated mainly on threonine residues. Some phosphorylation on serine residues. Autophosphorylation on Thr-168 is the major site enhancing kinase activity towards AfsR, and is regulated though interaction with KbpA.

It catalyses the reaction L-seryl-[protein] + ATP = O-phospho-L-seryl-[protein] + ADP + H(+). It carries out the reaction L-threonyl-[protein] + ATP = O-phospho-L-threonyl-[protein] + ADP + H(+). Functionally, component of the AfsK/AfsR system involved in the response of aerial mycelium formation to glucose. The chain is Serine/threonine-protein kinase AfsK (afsK) from Streptomyces griseus.